We begin with the raw amino-acid sequence, 200 residues long: Ribonuclease HII (200 aa).

An RNase H type-2 domain is found at 14–200; the sequence is SRLAGVDEVG…FAPVKQWQLL (187 aa). A divalent metal cation contacts are provided by Asp-20, Glu-21, and Asp-112.

The protein belongs to the RNase HII family. Requires Mn(2+) as cofactor. Mg(2+) is required as a cofactor.

The protein localises to the cytoplasm. It catalyses the reaction Endonucleolytic cleavage to 5'-phosphomonoester.. Functionally, endonuclease that specifically degrades the RNA of RNA-DNA hybrids. The chain is Ribonuclease HII from Chromohalobacter salexigens (strain ATCC BAA-138 / DSM 3043 / CIP 106854 / NCIMB 13768 / 1H11).